Consider the following 299-residue polypeptide: Tyrosine recombinase XerC (299 aa).

The 85-residue stretch at 1-85 (MEQHLDAYCM…AVRGFYKYLN (85 aa)) folds into the Core-binding (CB) domain. The 180-residue stretch at 106-285 (RLPKTLDTDR…DFQHLATVYD (180 aa)) folds into the Tyr recombinase domain. Residues R146, K170, H237, R240, and H263 contribute to the active site. The O-(3'-phospho-DNA)-tyrosine intermediate role is filled by Y272.

The protein belongs to the 'phage' integrase family. XerC subfamily. In terms of assembly, forms a cyclic heterotetrameric complex composed of two molecules of XerC and two molecules of XerD.

Its subcellular location is the cytoplasm. In terms of biological role, site-specific tyrosine recombinase, which acts by catalyzing the cutting and rejoining of the recombining DNA molecules. The XerC-XerD complex is essential to convert dimers of the bacterial chromosome into monomers to permit their segregation at cell division. It also contributes to the segregational stability of plasmids. The chain is Tyrosine recombinase XerC from Pseudomonas syringae pv. tomato (strain ATCC BAA-871 / DC3000).